We begin with the raw amino-acid sequence, 656 residues long: MGCCSSASAAQSSKREWKPLEDRSCTDIPWLLLFVLFCIGMGFICGFSVATGAAARLVSGYDSYGNICGQRNAKLEAIANSGLDHTHRKYVFFLDPCNLDLINRKIKSMALCVAACPRQELKTLSDVQKFAEINGSALCSYNIKPSEYTLTAKSSAFCPKLPVPASAPIPFFHRCAPVNISCYAKFAEALITFVSDNSVLHRLISGVMTSKEIILGLCLLSLVLSMILMVIIRYISRVLVWILTILVILGSLGGTGVLWWLYAKQRRSPKETVIPEQLQIAEDNLRALLIYAISATVFTVILFLIMLVMRKRVALTIALFHVAGKVFIHLPLLVFQPFWTFFALVLFWAYWIMTLLFLGTTGSAVQNEQGFVEYKISGPLQYMWWYHVVGLIWISEFILACQQMTVAGAVVTYYFTRDKRNLPFTPILASVNRLIRYHLGTVAKGSFIITLVKIPRMILMYIHSQLKGKENACARCMLKSCICCLWCLEKCLSYLNQNAYTATAINSTNFCTSAKDAFVILVENALRVAAINTVGDFMLFLGKVLIVCSTGLAGIMLLNYQQDYTVWVLPLIIVCLFAFLVAHCFLSIYEMVVDVLFLCFAIDTKYNDGSPGREFYMDKVLMEFVENSRKAMKEAGKGGAADARKLKPMASGASSA.

The N-myristoyl glycine moiety is linked to residue G2. Over 2 to 29 (GCCSSASAAQSSKREWKPLEDRSCTDIP) the chain is Cytoplasmic. A helical transmembrane segment spans residues 30 to 50 (WLLLFVLFCIGMGFICGFSVA). Over 51–211 (TGAAARLVSG…RLISGVMTSK (161 aa)) the chain is Extracellular. N134 and N179 each carry an N-linked (GlcNAc...) asparagine glycan. A helical transmembrane segment spans residues 212 to 232 (EIILGLCLLSLVLSMILMVII). Residues 233 to 237 (RYISR) are Cytoplasmic-facing. The chain crosses the membrane as a helical span at residues 238–258 (VLVWILTILVILGSLGGTGVL). The Extracellular portion of the chain corresponds to 259 to 287 (WWLYAKQRRSPKETVIPEQLQIAEDNLRA). Residues 288-308 (LLIYAISATVFTVILFLIMLV) traverse the membrane as a helical segment. Topologically, residues 309-314 (MRKRVA) are cytoplasmic. A helical transmembrane segment spans residues 315-335 (LTIALFHVAGKVFIHLPLLVF). Over 336 to 337 (QP) the chain is Extracellular. The chain crosses the membrane as a helical span at residues 338–358 (FWTFFALVLFWAYWIMTLLFL). The Cytoplasmic portion of the chain corresponds to 359–379 (GTTGSAVQNEQGFVEYKISGP). A helical membrane pass occupies residues 380–400 (LQYMWWYHVVGLIWISEFILA). The Extracellular portion of the chain corresponds to 401–441 (CQQMTVAGAVVTYYFTRDKRNLPFTPILASVNRLIRYHLGT). The helical transmembrane segment at 442 to 462 (VAKGSFIITLVKIPRMILMYI) threads the bilayer. Topologically, residues 463 to 536 (HSQLKGKENA…RVAAINTVGD (74 aa)) are cytoplasmic. Residues 537–557 (FMLFLGKVLIVCSTGLAGIML) traverse the membrane as a helical segment. Residues 558–565 (LNYQQDYT) lie on the Extracellular side of the membrane. The helical transmembrane segment at 566–586 (VWVLPLIIVCLFAFLVAHCFL) threads the bilayer. Topologically, residues 587–656 (SIYEMVVDVL…KPMASGASSA (70 aa)) are cytoplasmic. The disordered stretch occupies residues 635–656 (AGKGGAADARKLKPMASGASSA). Residue S651 is modified to Phosphoserine.

Belongs to the CTL (choline transporter-like) family. As to expression, expressed in neurons, oligodendrocytes and astrocytes. Also expressed in the mucosal cell layer of the colon. In the developing brain, isoform 1 is expressed in both neurons and oligodendroglial cells, whereas isoform 2 is restricted to oligodendroglial cells.

The protein resides in the cell membrane. The protein localises to the mitochondrion outer membrane. The catalysed reaction is choline(out) + n H(+)(in) = choline(in) + n H(+)(out). It catalyses the reaction ethanolamine(out) + n H(+)(in) = ethanolamine(in) + n H(+)(out). Its function is as follows. Choline transporter, acts as a choline/H+ antiporter. Also acts as a high-affinity ethanolamine/H+ antiporter, regulating the supply of extracellular ethanolamine (Etn) for the CDP-Etn pathway, redistribute intracellular Etn and balance the CDP-Cho and CDP-Etn arms of the Kennedy pathway. Involved in membrane synthesis and myelin production. This is Choline transporter-like protein 1 (Slc44a1) from Rattus norvegicus (Rat).